A 112-amino-acid chain; its full sequence is Large ribosomal subunit protein bL17 (112 aa).

The protein belongs to the bacterial ribosomal protein bL17 family. As to quaternary structure, part of the 50S ribosomal subunit. Contacts protein L32.

In Desulforamulus reducens (strain ATCC BAA-1160 / DSM 100696 / MI-1) (Desulfotomaculum reducens), this protein is Large ribosomal subunit protein bL17.